We begin with the raw amino-acid sequence, 103 residues long: Large ribosomal subunit protein bL21 (103 aa).

The protein belongs to the bacterial ribosomal protein bL21 family. Part of the 50S ribosomal subunit. Contacts protein L20.

This protein binds to 23S rRNA in the presence of protein L20. This chain is Large ribosomal subunit protein bL21, found in Heliobacterium modesticaldum (strain ATCC 51547 / Ice1).